Consider the following 585-residue polypeptide: Glutamine--tRNA ligase (585 aa).

A 'HIGH' region motif is present at residues 51–61 (PEPNGYLHIGH). Residues 52 to 54 (EPN) and 58 to 64 (HIGHAKS) contribute to the ATP site. The L-glutamine site is built by Asp-84 and Tyr-238. Residues Thr-257 and 292–293 (RL) each bind ATP. A 'KMSKS' region motif is present at residues 299 to 303 (ITSKR).

It belongs to the class-I aminoacyl-tRNA synthetase family. As to quaternary structure, monomer.

It localises to the cytoplasm. The enzyme catalyses tRNA(Gln) + L-glutamine + ATP = L-glutaminyl-tRNA(Gln) + AMP + diphosphate. The polypeptide is Glutamine--tRNA ligase (Cupriavidus taiwanensis (strain DSM 17343 / BCRC 17206 / CCUG 44338 / CIP 107171 / LMG 19424 / R1) (Ralstonia taiwanensis (strain LMG 19424))).